A 368-amino-acid polypeptide reads, in one-letter code: Ubl carboxyl-terminal hydrolase 18 (368 aa).

The mediates interaction with IFNAR2 stretch occupies residues 31–48 (MKRKRVLSRDLCSAWDSP). Residues 48–109 (PHGLVGLHNI…LLLLLEKMQD (62 aa)) are mediates interaction with STAT2. In terms of domain architecture, USP spans 52–366 (VGLHNIGQTC…TAYLLVYTKT (315 aa)). Cysteine 61 serves as the catalytic Nucleophile. Residues 299–308 (ELFAVIAHVG) form a mediates interaction with STAT2 and necessary for the negative regulation of the type I IFN signaling pathway region. The segment at 309-368 (MADFGHYCAYIRNPVDGKWFCFNDSHVCWVTWKDVQCTYGNHRYRWRETAYLLVYTKTGS) is mediates interaction with IFNAR2. Histidine 314 functions as the Proton acceptor in the catalytic mechanism.

This sequence belongs to the peptidase C19 family. Interacts with STAT2; the interaction is direct. Interacts with IFNAR2; indirectly via STAT2, it negatively regulates the assembly of the ternary interferon-IFNAR1-IFNAR2 complex and inhibits type I interferon signaling. Interacts with STING1. Interacts with USP20.

It carries out the reaction Thiol-dependent hydrolysis of ester, thioester, amide, peptide and isopeptide bonds formed by the C-terminal Gly of ubiquitin (a 76-residue protein attached to proteins as an intracellular targeting signal).. Functionally, interferon-induced ISG15-specific protease that plays a crucial role for maintaining a proper balance of ISG15-conjugated proteins in cells. Regulates protein ISGylation by efficiently cleaving ISG15 conjugates linked via isopeptide bonds. Regulates T-cell activation and T-helper 17 (Th17) cell differentiation by deubiquitinating TAK1, likely to keep TAK1-TAB complexes in steady conditions. In turn, restricts activation of NF-kappa-B, NFAT, and JNK as well as expression of IL2 in T-cells after TCR activation. Acts as a molecular adapter with USP20 to promote innate antiviral response through deubiquitinating STING1. Involved also in the negative regulation of the inflammatory response triggered by type I interferon. Upon recruitment by STAT2 to the type I interferon receptor subunit IFNAR2 interferes with the assembly of the ternary interferon-IFNAR1-IFNAR2 complex and acts as a negative regulator of the type I interferon signaling pathway. The protein is Ubl carboxyl-terminal hydrolase 18 (Usp18) of Mus musculus (Mouse).